A 374-amino-acid chain; its full sequence is Ribosomal RNA large subunit methyltransferase G (374 aa).

It belongs to the methyltransferase superfamily. RlmG family.

It localises to the cytoplasm. It catalyses the reaction guanosine(1835) in 23S rRNA + S-adenosyl-L-methionine = N(2)-methylguanosine(1835) in 23S rRNA + S-adenosyl-L-homocysteine + H(+). Its function is as follows. Specifically methylates the guanine in position 1835 (m2G1835) of 23S rRNA. The sequence is that of Ribosomal RNA large subunit methyltransferase G from Pseudomonas syringae pv. syringae (strain B728a).